Consider the following 216-residue polypeptide: Cell division protein SepF (216 aa).

The tract at residues 22 to 126 (EYVEEPDQAR…PVVDDGGPLA (105 aa)) is disordered. Composition is skewed to basic and acidic residues over residues 28-50 (DQAR…REFV), 62-80 (SRRD…RPRV), and 106-118 (ARAE…RAPV).

It belongs to the SepF family. Homodimer. Interacts with FtsZ.

It is found in the cytoplasm. Functionally, cell division protein that is part of the divisome complex and is recruited early to the Z-ring. Probably stimulates Z-ring formation, perhaps through the cross-linking of FtsZ protofilaments. Its function overlaps with FtsA. This is Cell division protein SepF from Rhodococcus erythropolis (strain PR4 / NBRC 100887).